A 109-amino-acid polypeptide reads, in one-letter code: Cell division protein ZapA (109 aa).

Residues 21-99 (PDQRDALNQA…IEQALLEQGR (79 aa)) adopt a coiled-coil conformation.

Belongs to the ZapA family. Type 1 subfamily. As to quaternary structure, homodimer. Interacts with FtsZ.

The protein resides in the cytoplasm. Its function is as follows. Activator of cell division through the inhibition of FtsZ GTPase activity, therefore promoting FtsZ assembly into bundles of protofilaments necessary for the formation of the division Z ring. It is recruited early at mid-cell but it is not essential for cell division. This Shigella boydii serotype 18 (strain CDC 3083-94 / BS512) protein is Cell division protein ZapA.